Reading from the N-terminus, the 545-residue chain is Glucose-6-phosphate isomerase (545 aa).

Catalysis depends on E351, which acts as the Proton donor. Active-site residues include H382 and K510.

The protein belongs to the GPI family.

The protein resides in the cytoplasm. The catalysed reaction is alpha-D-glucose 6-phosphate = beta-D-fructose 6-phosphate. It participates in carbohydrate biosynthesis; gluconeogenesis. The protein operates within carbohydrate degradation; glycolysis; D-glyceraldehyde 3-phosphate and glycerone phosphate from D-glucose: step 2/4. Its function is as follows. Catalyzes the reversible isomerization of glucose-6-phosphate to fructose-6-phosphate. The chain is Glucose-6-phosphate isomerase from Helicobacter pylori (strain HPAG1).